A 1026-amino-acid polypeptide reads, in one-letter code: HEAT repeat-containing protein 4 (1026 aa).

The disordered stretch occupies residues 135 to 175 (AVKTESSANPEKKLKKSKPASTVREAPRPLIHHPCMHPDML). HEAT repeat units follow at residues 530 to 568 (LLPA…NIMQ), 724 to 760 (KLMT…QIRD), and 761 to 794 (KMVL…GQVS).

The polypeptide is HEAT repeat-containing protein 4 (HEATR4) (Homo sapiens (Human)).